The chain runs to 169 residues: Ribosome maturation factor RimM (169 aa).

The PRC barrel domain occupies 94–166 (EEGFYDHELE…TATITPPDGL (73 aa)).

It belongs to the RimM family. Binds ribosomal protein uS19.

It localises to the cytoplasm. An accessory protein needed during the final step in the assembly of 30S ribosomal subunit, possibly for assembly of the head region. Essential for efficient processing of 16S rRNA. May be needed both before and after RbfA during the maturation of 16S rRNA. It has affinity for free ribosomal 30S subunits but not for 70S ribosomes. This Corynebacterium efficiens (strain DSM 44549 / YS-314 / AJ 12310 / JCM 11189 / NBRC 100395) protein is Ribosome maturation factor RimM.